The primary structure comprises 201 residues: Proteinase inhibitor type-2 CEVI57 (201 aa).

The N-terminal stretch at 1–23 (MAVYKVSFLAHLLVLGMYLLVST) is a signal peptide. 3 tandem repeats follow at residues 27-83 (ANAC…DPKN), 84-143 (PNIC…IEPK), and 144-199 (GCTK…QSIS). Cystine bridges form between Cys-30-Cys-118, Cys-34-Cys-114, Cys-42-Cys-124, Cys-54-Cys-91, Cys-57-Cys-75, Cys-58-Cys-87, Cys-64-Cys-100, and Cys-117-Cys-135.

This sequence belongs to the protease inhibitor I20 (potato type II proteinase inhibitor) family.

This is Proteinase inhibitor type-2 CEVI57 (CEVI57) from Solanum lycopersicum (Tomato).